The following is a 952-amino-acid chain: Leucine--tRNA ligase (952 aa).

Residues 66–77 (PYPSGAGLHVGH) carry the 'HIGH' region motif. Residues 722-726 (KMGKS) carry the 'KMSKS' region motif. Lys-725 is an ATP binding site.

This sequence belongs to the class-I aminoacyl-tRNA synthetase family.

Its subcellular location is the cytoplasm. It catalyses the reaction tRNA(Leu) + L-leucine + ATP = L-leucyl-tRNA(Leu) + AMP + diphosphate. The sequence is that of Leucine--tRNA ligase from Corynebacterium glutamicum (strain R).